The primary structure comprises 72 residues: Translation initiation factor IF-1 (72 aa).

An S1-like domain is found at 1 to 72 (MAKDDVIEID…DKGRITYRYK (72 aa)).

The protein belongs to the IF-1 family. In terms of assembly, component of the 30S ribosomal translation pre-initiation complex which assembles on the 30S ribosome in the order IF-2 and IF-3, IF-1 and N-formylmethionyl-tRNA(fMet); mRNA recruitment can occur at any time during PIC assembly.

It is found in the cytoplasm. In terms of biological role, one of the essential components for the initiation of protein synthesis. Stabilizes the binding of IF-2 and IF-3 on the 30S subunit to which N-formylmethionyl-tRNA(fMet) subsequently binds. Helps modulate mRNA selection, yielding the 30S pre-initiation complex (PIC). Upon addition of the 50S ribosomal subunit IF-1, IF-2 and IF-3 are released leaving the mature 70S translation initiation complex. This Campylobacter curvus (strain 525.92) protein is Translation initiation factor IF-1.